Here is a 566-residue protein sequence, read N- to C-terminus: DNA ligase B (566 aa).

The active-site N6-AMP-lysine intermediate is K125.

Belongs to the NAD-dependent DNA ligase family. LigB subfamily.

The catalysed reaction is NAD(+) + (deoxyribonucleotide)n-3'-hydroxyl + 5'-phospho-(deoxyribonucleotide)m = (deoxyribonucleotide)n+m + AMP + beta-nicotinamide D-nucleotide.. Its function is as follows. Catalyzes the formation of phosphodiester linkages between 5'-phosphoryl and 3'-hydroxyl groups in double-stranded DNA using NAD as a coenzyme and as the energy source for the reaction. In Pseudomonas putida (strain ATCC 700007 / DSM 6899 / JCM 31910 / BCRC 17059 / LMG 24140 / F1), this protein is DNA ligase B.